Reading from the N-terminus, the 109-residue chain is Short-chain dehydrogenase/reductase homolog YusS (109 aa).

It belongs to the short-chain dehydrogenases/reductases (SDR) family.

The sequence is that of Short-chain dehydrogenase/reductase homolog YusS (yusS) from Bacillus subtilis (strain 168).